The chain runs to 121 residues: Small ribosomal subunit protein uS13 (121 aa).

The interval 93–121 is disordered; that stretch reads RGLPVRGQNTKNNARTRKGKATAIAGKKK. Over residues 106-121 the composition is skewed to basic residues; sequence ARTRKGKATAIAGKKK.

The protein belongs to the universal ribosomal protein uS13 family. As to quaternary structure, part of the 30S ribosomal subunit. Forms a loose heterodimer with protein S19. Forms two bridges to the 50S subunit in the 70S ribosome.

Functionally, located at the top of the head of the 30S subunit, it contacts several helices of the 16S rRNA. In the 70S ribosome it contacts the 23S rRNA (bridge B1a) and protein L5 of the 50S subunit (bridge B1b), connecting the 2 subunits; these bridges are implicated in subunit movement. Contacts the tRNAs in the A and P-sites. The protein is Small ribosomal subunit protein uS13 of Streptococcus uberis (strain ATCC BAA-854 / 0140J).